The chain runs to 146 residues: Spermidine export protein MdtJ (146 aa).

The next 4 membrane-spanning stretches (helical) occupy residues methionine 1–methionine 21, threonine 31–valine 51, valine 54–phenylalanine 74, and valine 76–alanine 96.

It belongs to the drug/metabolite transporter (DMT) superfamily. Small multidrug resistance (SMR) (TC 2.A.7.1) family. MdtJ subfamily. As to quaternary structure, forms a complex with MdtI.

It is found in the cell inner membrane. Functionally, catalyzes the excretion of spermidine. This chain is Spermidine export protein MdtJ, found in Proteus mirabilis (strain HI4320).